Consider the following 150-residue polypeptide: Large ribosomal subunit protein bL9 (150 aa).

The protein belongs to the bacterial ribosomal protein bL9 family.

Its function is as follows. Binds to the 23S rRNA. This Methylibium petroleiphilum (strain ATCC BAA-1232 / LMG 22953 / PM1) protein is Large ribosomal subunit protein bL9.